The primary structure comprises 385 residues: S-adenosylmethionine synthase (385 aa).

His-15 serves as a coordination point for ATP. A Mg(2+)-binding site is contributed by Asp-17. Glu-43 is a K(+) binding site. 2 residues coordinate L-methionine: Glu-56 and Gln-99. Residues 99–109 (QSPDINQGVDR) form a flexible loop region. Residues 164 to 166 (DAK), 230 to 231 (RF), Asp-239, 245 to 246 (RK), Ala-262, and Lys-266 contribute to the ATP site. An L-methionine-binding site is contributed by Asp-239. Lys-270 provides a ligand contact to L-methionine.

Belongs to the AdoMet synthase family. Homotetramer; dimer of dimers. It depends on Mg(2+) as a cofactor. K(+) is required as a cofactor.

The protein localises to the cytoplasm. The catalysed reaction is L-methionine + ATP + H2O = S-adenosyl-L-methionine + phosphate + diphosphate. It participates in amino-acid biosynthesis; S-adenosyl-L-methionine biosynthesis; S-adenosyl-L-methionine from L-methionine: step 1/1. In terms of biological role, catalyzes the formation of S-adenosylmethionine (AdoMet) from methionine and ATP. The overall synthetic reaction is composed of two sequential steps, AdoMet formation and the subsequent tripolyphosphate hydrolysis which occurs prior to release of AdoMet from the enzyme. The sequence is that of S-adenosylmethionine synthase from Hamiltonella defensa subsp. Acyrthosiphon pisum (strain 5AT).